A 127-amino-acid chain; its full sequence is MSANTEAQGSGRGLEAMKWVVVVALLLVAIVGNYLYRDIMLPLRALAVVILIAAAGGVALLTTKGKATVAFAREARTEVRKVIWPTRQETLHTTLIVAAVTAVMSLILWGLDGILVRLVSFITGLRF.

Residues 1 to 19 (MSANTEAQGSGRGLEAMKW) lie on the Cytoplasmic side of the membrane. The helical transmembrane segment at 20–32 (VVVVALLLVAIVG) threads the bilayer. Topologically, residues 33-48 (NYLYRDIMLPLRALAV) are periplasmic. Residues 49 to 60 (VILIAAAGGVAL) form a helical membrane-spanning segment. Residues 61–97 (LTTKGKATVAFAREARTEVRKVIWPTRQETLHTTLIV) are Cytoplasmic-facing. The chain crosses the membrane as a helical span at residues 98 to 115 (AAVTAVMSLILWGLDGIL). The Periplasmic segment spans residues 116–127 (VRLVSFITGLRF).

This sequence belongs to the SecE/SEC61-gamma family. In terms of assembly, component of the Sec protein translocase complex. Heterotrimer consisting of SecY, SecE and SecG subunits. The heterotrimers can form oligomers, although 1 heterotrimer is thought to be able to translocate proteins. Interacts with the ribosome. Interacts with SecDF, and other proteins may be involved. Interacts with SecA.

It localises to the cell inner membrane. In terms of biological role, essential subunit of the Sec protein translocation channel SecYEG. Clamps together the 2 halves of SecY. May contact the channel plug during translocation. The protein is Protein translocase subunit SecE of Escherichia coli O157:H7.